Here is a 142-residue protein sequence, read N- to C-terminus: Large ribosomal subunit protein uL13 (142 aa).

Belongs to the universal ribosomal protein uL13 family. Part of the 50S ribosomal subunit.

Functionally, this protein is one of the early assembly proteins of the 50S ribosomal subunit, although it is not seen to bind rRNA by itself. It is important during the early stages of 50S assembly. In Herminiimonas arsenicoxydans, this protein is Large ribosomal subunit protein uL13.